A 467-amino-acid polypeptide reads, in one-letter code: Sodium-dependent phosphate transport protein 1 (467 aa).

N-linked (GlcNAc...) asparagine glycosylation is found at Asn41, Asn49, and Asn58. The next 10 helical transmembrane spans lie at 81 to 101 (GIILSSTSYGVIIIQVPVGYF), 119 to 139 (SVLSLLIPPAAGIGVAWVVVC), 178 to 198 (FLLGPFIVLLVTGVICESLGW), 200 to 220 (MVFYIFGACGCAVCLLWFVLF), 257 to 277 (AILKSLPVWAISTGSFTFFWS), 301 to 321 (GFLSSLPYLFAWICGNLAGQL), 339 to 359 (LFTAAGFLLPAIFGVCLPYLS), 365 to 385 (IVIFLILAGATGSFCLGGVFI), 401 to 421 (CSTLTGMIGGLIASTLTGLIL), and 433 to 453 (FILMAAINVTGLIFYLIVATA).

This sequence belongs to the major facilitator superfamily. Sodium/anion cotransporter family. Interacts with PDZK1. As to expression, expressed in kidney cortex, liver and brain but not in other tissues.

The protein localises to the apical cell membrane. It carries out the reaction 3 Na(+)(out) + phosphate(out) = 3 Na(+)(in) + phosphate(in). The enzyme catalyses urate(out) = urate(in). Functionally, important for the resorption of phosphate by the kidney. May be involved in actively transporting phosphate into cells via Na(+) cotransport in the renal brush border membrane. Plays a role in urate transport in the kidney. This chain is Sodium-dependent phosphate transport protein 1 (SLC17A1), found in Homo sapiens (Human).